A 408-amino-acid chain; its full sequence is MSGGSADYNSREHGGPEGMDPDGVIESNWNEIVDNFDDMNLKESLLRGIYAYGFEKPSAIQQRAIIPCIKGYDVIAQAQSGTGKTATFAISILQQLEIEFKETQALVLAPTRELAQQIQKVILALGDYMGATCHACIGGTNVRNEMQKLQAEAPHIVVGTPGRVFDMLNRRYLSPKWIKMFVLDEADGMLSRGFKDQIYEIFQKLNTSIQVVLLSATMPTDVLEVTKKFMRDPIRILVKKEELTLEGIKQFYINVEREEWKLDTLCDLYETLTITQAVIFLNTRRKVDWLTEKMHARDFTVSALHGDMDQKERDVIMREFRSGSSRVLITTDLLARGIDVQQVSLVINYDLPTNRENYIHRIGRGGRFGRKGVAINFVTEEDKRILRDIETFYNTTVEEMPMNVADLI.

The segment at 1–22 (MSGGSADYNSREHGGPEGMDPD) is disordered. A Q motif motif is present at residues 34-62 (DNFDDMNLKESLLRGIYAYGFEKPSAIQQ). The Helicase ATP-binding domain occupies 65 to 236 (IIPCIKGYDV…KKFMRDPIRI (172 aa)). 77 to 84 (QAQSGTGK) contributes to the ATP binding site. Threonine 160 is modified (phosphothreonine). A DEAD box motif is present at residues 183–186 (LDEA). The Helicase C-terminal domain maps to 247–408 (GIKQFYINVE…EMPMNVADLI (162 aa)).

The protein belongs to the DEAD box helicase family. eIF4A subfamily. EIF4F is a multi-subunit complex, the composition of which varies with external and internal environmental conditions. It is composed of at least EIF4A, EIF4E and EIF4G1/EIFFG3. Interacts with EIF4E. May interact with NOM1.

The catalysed reaction is ATP + H2O = ADP + phosphate + H(+). ATP-dependent RNA helicase which is a subunit of the eIF4F complex involved in cap recognition and is required for mRNA binding to ribosome. In the current model of translation initiation, eIF4A unwinds RNA secondary structures in the 5'-UTR of mRNAs which is necessary to allow efficient binding of the small ribosomal subunit, and subsequent scanning for the initiator codon. The polypeptide is Eukaryotic initiation factor 4A-II (EIF4A2) (Macaca fascicularis (Crab-eating macaque)).